Reading from the N-terminus, the 280-residue chain is Large ribosomal subunit protein uL2 (280 aa).

Disordered stretches follow at residues 33–55 (LTEG…RRRG) and 224–266 (AMNP…KASQ). A compositionally biased stretch (basic residues) spans 256–266 (TRTRNKNKASQ).

It belongs to the universal ribosomal protein uL2 family. Part of the 50S ribosomal subunit. Forms a bridge to the 30S subunit in the 70S ribosome.

Functionally, one of the primary rRNA binding proteins. Required for association of the 30S and 50S subunits to form the 70S ribosome, for tRNA binding and peptide bond formation. It has been suggested to have peptidyltransferase activity; this is somewhat controversial. Makes several contacts with the 16S rRNA in the 70S ribosome. The chain is Large ribosomal subunit protein uL2 from Ruegeria pomeroyi (strain ATCC 700808 / DSM 15171 / DSS-3) (Silicibacter pomeroyi).